We begin with the raw amino-acid sequence, 308 residues long: Protoheme IX farnesyltransferase (308 aa).

Helical transmembrane passes span 31-51, 53-73, 102-122, 124-144, 149-169, 170-190, 242-262, and 288-308; these read VIELLLVTTIPAMLLADRGTV, PLLILNTLVGGMLAAAGANTL, HALIFGLVLTVTSFCWLWLST, LLSGLLAVATIAFYVFVYTML, TSQNVVWGGAAGCMPVMIGWS, AVTGTIQWPALVMFLIIFFWT, LATGWLYGAVALLAGAWFLVM, and YLAVVFCALAIDSALALPTLL.

It belongs to the UbiA prenyltransferase family. Protoheme IX farnesyltransferase subfamily.

It localises to the cell membrane. It catalyses the reaction heme b + (2E,6E)-farnesyl diphosphate + H2O = Fe(II)-heme o + diphosphate. Its pathway is porphyrin-containing compound metabolism; heme O biosynthesis; heme O from protoheme: step 1/1. Its function is as follows. Converts heme B (protoheme IX) to heme O by substitution of the vinyl group on carbon 2 of heme B porphyrin ring with a hydroxyethyl farnesyl side group. In Mycolicibacterium smegmatis (strain ATCC 700084 / mc(2)155) (Mycobacterium smegmatis), this protein is Protoheme IX farnesyltransferase.